The primary structure comprises 295 residues: MFKKYIFILILFIASIARAEIIEVDSLNKIKQDFKENYNKNYVPQDLLVVTVLDEFLFKSLVPIVTQLDKDIYLTTLTPLLRNINKNSKTIYIKQLILTNDSYKKELQESDFPNFVNEISNSKIPIIAVNDGFTGNFNNIPKFEIWFADYLKKNFDIDFSNSFPNNNYIIFNNLDSFANTYPVFYKGILTSNNISEAEMMLNFLIQMNFIPKCFIMISSSIELLSSMELQLSSYSSNILFIGYHYNNKNTPKNKDVAYYTKLINDLISQINKLKRNNPPLKNNNAKGKNPYDTNK.

The signal sequence occupies residues Met1 to Ala19. Positions Arg275–Lys295 are disordered. Positions Asn276–Lys295 are enriched in low complexity.

This is an uncharacterized protein from Rickettsia conorii (strain ATCC VR-613 / Malish 7).